The sequence spans 493 residues: Cobyric acid synthase (493 aa).

Residues 255–441 (ELEIAVLRLP…LHGLLENGRW (187 aa)) form the GATase cobBQ-type domain. Catalysis depends on cysteine 336, which acts as the Nucleophile. Residue histidine 433 is part of the active site.

It belongs to the CobB/CobQ family. CobQ subfamily.

It participates in cofactor biosynthesis; adenosylcobalamin biosynthesis. Its function is as follows. Catalyzes amidations at positions B, D, E, and G on adenosylcobyrinic A,C-diamide. NH(2) groups are provided by glutamine, and one molecule of ATP is hydrogenolyzed for each amidation. The chain is Cobyric acid synthase from Synechococcus sp. (strain RCC307).